A 535-amino-acid polypeptide reads, in one-letter code: CTP synthase (535 aa).

The tract at residues 1–266 (MKTKFIFITG…DEQVVEKLNI (266 aa)) is amidoligase domain. Position 14 (Ser14) interacts with CTP. UTP is bound at residue Ser14. ATP is bound by residues 15-20 (SIGKGL) and Asp72. Mg(2+) is bound by residues Asp72 and Glu140. CTP-binding positions include 147-149 (DIE), 187-192 (KTKPTQ), and Lys223. Residues 187 to 192 (KTKPTQ) and Lys223 contribute to the UTP site. A Glutamine amidotransferase type-1 domain is found at 292 to 534 (RIAIVGKYVN…IGASLTHRNQ (243 aa)). Gly354 is a binding site for L-glutamine. Residue Cys381 is the Nucleophile; for glutamine hydrolysis of the active site. L-glutamine-binding positions include 382–385 (LGMQ), Glu405, and Arg462. Active-site residues include His507 and Glu509.

It belongs to the CTP synthase family. In terms of assembly, homotetramer.

It carries out the reaction UTP + L-glutamine + ATP + H2O = CTP + L-glutamate + ADP + phosphate + 2 H(+). The catalysed reaction is L-glutamine + H2O = L-glutamate + NH4(+). It catalyses the reaction UTP + NH4(+) + ATP = CTP + ADP + phosphate + 2 H(+). It participates in pyrimidine metabolism; CTP biosynthesis via de novo pathway; CTP from UDP: step 2/2. Allosterically activated by GTP, when glutamine is the substrate; GTP has no effect on the reaction when ammonia is the substrate. The allosteric effector GTP functions by stabilizing the protein conformation that binds the tetrahedral intermediate(s) formed during glutamine hydrolysis. Inhibited by the product CTP, via allosteric rather than competitive inhibition. In terms of biological role, catalyzes the ATP-dependent amination of UTP to CTP with either L-glutamine or ammonia as the source of nitrogen. Regulates intracellular CTP levels through interactions with the four ribonucleotide triphosphates. This Trichlorobacter lovleyi (strain ATCC BAA-1151 / DSM 17278 / SZ) (Geobacter lovleyi) protein is CTP synthase.